The following is a 390-amino-acid chain: 2-deoxy-scyllo-inosose synthase (390 aa).

Residues D42, 73-76 (EQNK), 105-109 (GVTGN), 129-130 (TT), 140-142 (SLK), and 151-152 (KN) each bind NAD(+). K142 is an active-site residue. Co(2+) is bound at residue E184. E244 is a catalytic residue. Co(2+) contacts are provided by H247 and H263. Residues 371-390 (PPRPAAARTDDAATVLGGAG) are disordered.

The protein belongs to the sugar phosphate cyclases superfamily. DOI synthase family. The cofactor is NAD(+). Requires Co(2+) as cofactor.

The enzyme catalyses D-glucose 6-phosphate = 2-deoxy-L-scyllo-inosose + phosphate. Its pathway is metabolic intermediate biosynthesis; 2-deoxystreptamine biosynthesis; 2-deoxystreptamine from D-glucose 6-phosphate: step 1/4. It participates in antibiotic biosynthesis; kanamycin biosynthesis. Functionally, catalyzes the intramolecular carbocycle formation from D-glucose-6-phosphate to 2-deoxy-scyllo-inosose (DOI). The chain is 2-deoxy-scyllo-inosose synthase (kanC) from Streptomyces kanamyceticus.